A 459-amino-acid polypeptide reads, in one-letter code: MKDFDTIAAISTVLGEGGISIIRISGDKSLAIVNKLFKAKNGKDILDMKPYTMKYGHIIEQDTKNILDEVLISYMKAPRSFTAEDTVEINCHGGVTPTKKIFQEVIKAGVRVAEPGEFTKRAFLNGRIDLTQAEAVIDIIRSKTELSMKSAVSQSIGKVSEEINVLRENLIETIAHIEATVDYPEEDLEEITSSQVQEKIEKIIEELERLLDTSEEGKIIREGLDVVIVGKPNVGKSSLLNALLSEKRAIVTEIPGTTRDVIEEYINLDGIPIKIIDTAGIRETEDLVEKIGVERSKEKINEADLVILVLDSSNKLNDEDYEIIEYIKDKKYITLLNKSDLESKINKSDLEDLKLYNIIEISAKMGFGLEDLKEYIKDLFFKGDIQTDSIIITNTRHKEALIRAKESCNTALKALENTLAIDLASIDIKNAWLSLGEITGDTLEEDIIDKIFSEFCLGK.

(6S)-5-formyl-5,6,7,8-tetrahydrofolate-binding residues include Arg-23, Glu-88, and Arg-127. Residues 223 to 381 (GLDVVIVGKP…LKEYIKDLFF (159 aa)) enclose the TrmE-type G domain. Residue Asn-233 coordinates K(+). GTP-binding positions include 233 to 238 (NVGKSS), 252 to 258 (TEIPGTT), and 277 to 280 (DTAG). Residue Ser-237 coordinates Mg(2+). Residues Thr-252, Ile-254, and Thr-257 each coordinate K(+). Position 258 (Thr-258) interacts with Mg(2+). Residue Lys-459 coordinates (6S)-5-formyl-5,6,7,8-tetrahydrofolate.

Belongs to the TRAFAC class TrmE-Era-EngA-EngB-Septin-like GTPase superfamily. TrmE GTPase family. In terms of assembly, homodimer. Heterotetramer of two MnmE and two MnmG subunits. K(+) is required as a cofactor.

The protein resides in the cytoplasm. Its function is as follows. Exhibits a very high intrinsic GTPase hydrolysis rate. Involved in the addition of a carboxymethylaminomethyl (cmnm) group at the wobble position (U34) of certain tRNAs, forming tRNA-cmnm(5)s(2)U34. This Clostridium tetani (strain Massachusetts / E88) protein is tRNA modification GTPase MnmE.